The primary structure comprises 266 residues: Undecaprenyl-diphosphatase (266 aa).

Helical transmembrane passes span 1–21, 39–59, 86–106, 117–137, 153–173, 190–210, 216–236, and 246–266; these read MDFL…FIPV, PGSS…FWYF, SIFI…LFVT, FSIA…DIST, FIGI…GATI, SFLL…ITSI, FPFL…LLAI, and NGLK…ILNL.

Belongs to the UppP family.

Its subcellular location is the cell inner membrane. It catalyses the reaction di-trans,octa-cis-undecaprenyl diphosphate + H2O = di-trans,octa-cis-undecaprenyl phosphate + phosphate + H(+). Functionally, catalyzes the dephosphorylation of undecaprenyl diphosphate (UPP). Confers resistance to bacitracin. The polypeptide is Undecaprenyl-diphosphatase (Prochlorococcus marinus (strain MIT 9515)).